The sequence spans 187 residues: Capsid protein (187 aa).

Positions 150-187 are disordered; the sequence is RRGGARASRSPRRRTPSPRRRRSQSPRRRRSQSPSANC. Residues 158–180 show a composition bias toward basic residues; that stretch reads RSPRRRTPSPRRRRSQSPRRRRS. Phosphoserine; by host is present on residues Ser-159, Ser-166, and Ser-174. One copy of the 1; half-length repeat lies at 159-165; that stretch reads SPRRRTP. The 3 X 8 AA repeats of S-P-R-R-R-[PR]-S-Q stretch occupies residues 159–181; that stretch reads SPRRRTPSPRRRRSQSPRRRRSQ. Residues 162-179 carry the Bipartite nuclear localization signal motif; it reads RRTPSPRRRRSQSPRRRR. A run of 2 repeats spans residues 166-173 and 174-181. The segment at 181–187 is RNA binding; that stretch reads QSPSANC.

It belongs to the orthohepadnavirus core antigen family. In terms of assembly, homodimerizes, then multimerizes. Interacts with cytosol exposed regions of viral L glycoprotein present in the reticulum-to-Golgi compartment. Interacts with human FLNB. Phosphorylated form interacts with host importin alpha; this interaction depends on the exposure of the NLS, which itself depends upon genome maturation and/or phosphorylation of the capsid protein. Interacts with host NUP153. Phosphorylated by host SRPK1, SRPK2, and maybe protein kinase C or GAPDH. Phosphorylation is critical for pregenomic RNA packaging. Protein kinase C phosphorylation is stimulated by HBx protein and may play a role in transport of the viral genome to the nucleus at the late step during the viral replication cycle.

It is found in the virion. The protein localises to the host cytoplasm. Self assembles to form an icosahedral capsid. Most capsids appear to be large particles with an icosahedral symmetry of T=4 and consist of 240 copies of capsid protein, though a fraction forms smaller T=3 particles consisting of 180 capsid proteins. Entering capsids are transported along microtubules to the nucleus. Phosphorylation of the capsid is thought to induce exposure of nuclear localization signal in the C-terminal portion of the capsid protein that allows binding to the nuclear pore complex via the importin (karyopherin-) alpha and beta. Capsids are imported in intact form through the nuclear pore into the nuclear basket, where it probably binds NUP153. Only capsids that contain the mature viral genome can release the viral DNA and capsid protein into the nucleoplasm. Immature capsids get stuck in the basket. Capsids encapsulate the pre-genomic RNA and the P protein. Pre-genomic RNA is reverse-transcribed into DNA while the capsid is still in the cytoplasm. The capsid can then either be directed to the nucleus, providing more genomes for transcription, or bud through the endoplasmic reticulum to provide new virions. The sequence is that of Capsid protein from Marmota monax (Woodchuck).